We begin with the raw amino-acid sequence, 800 residues long: Putative antiporter subunit mnhA2 (800 aa).

A run of 21 helical transmembrane segments spans residues 3–23, 29–49, 78–98, 109–129, 133–153, 167–187, 202–222, 249–269, 273–293, 300–320, 337–357, 387–407, 428–448, 472–492, 527–547, 596–616, 627–647, 651–671, 676–696, 712–732, and 768–788; these read LVYLLGGLIVIMLIVLMTLFI, FAGYIALLAPILASGYFLAQI, GLGLMFGLIISIIGVAVFFYA, LPRFFLYLLLFMFSMLGIVVS, ILMYVFWELTSVSSFLLISYW, FIITVLGGLALLTGFIMLYII, SISEHALFIPMMIMLLIGAFT, SATMVKAGIFLLFKFTPILGL, YIYIVTFVGLITMIFGSVTAL, GILAYSTISQLGMIMSMVGLG, LILFAGLFHLMNHAIFKCALF, LVMTLAALSMAGVPLLNGFLS, LTIIVVAIGVIASIFTFVYAV, PWLFSLPAIILMVMIPIIFFI, GVNLPLIFSVIVIIVGLILAL, IITVLIFSILIAYGIFQVGLP, GPLEVILGIMISVVGIALVFI, LTMVILNGIIGYSVALFFLLM, LALTQLVVETITTILFIVSFS, TIKIIVSFIMAGAVVTLIFIA, and LDTMFEGIVLIIAGLGIYTLL.

The protein belongs to the CPA3 antiporters (TC 2.A.63) subunit A family. As to quaternary structure, may form a heterooligomeric complex that consists of seven subunits: mnhA2, mnhB2, mnhC2, mnhD2, mnhE2, mnhF2 and mnhG2.

It is found in the cell membrane. The protein is Putative antiporter subunit mnhA2 (mnhA2) of Staphylococcus haemolyticus (strain JCSC1435).